The primary structure comprises 828 residues: Beta-galactosidase 13 (828 aa).

The signal sequence occupies residues Met1–Ala23. An N-linked (GlcNAc...) asparagine glycan is attached at Asn157. Glu187 acts as the Proton donor in catalysis. N-linked (GlcNAc...) asparagine glycans are attached at residues Asn198 and Asn249. Glu259 (nucleophile) is an active-site residue. 8 N-linked (GlcNAc...) asparagine glycosylation sites follow: Asn260, Asn362, Asn366, Asn392, Asn502, Asn578, Asn586, and Asn615. The SUEL-type lectin domain occupies Ala746–Cys828.

This sequence belongs to the glycosyl hydrolase 35 family.

Its subcellular location is the secreted. It localises to the extracellular space. It is found in the apoplast. The catalysed reaction is Hydrolysis of terminal non-reducing beta-D-galactose residues in beta-D-galactosides.. This Oryza sativa subsp. japonica (Rice) protein is Beta-galactosidase 13.